We begin with the raw amino-acid sequence, 565 residues long: NAD-dependent malic enzyme (565 aa).

Y104 functions as the Proton donor in the catalytic mechanism. R157 contributes to the NAD(+) binding site. The active-site Proton acceptor is K175. A divalent metal cation-binding residues include E246, D247, and D270. NAD(+) is bound by residues D270 and N418.

It belongs to the malic enzymes family. Homotetramer. Mg(2+) is required as a cofactor. Requires Mn(2+) as cofactor.

The enzyme catalyses (S)-malate + NAD(+) = pyruvate + CO2 + NADH. It catalyses the reaction oxaloacetate + H(+) = pyruvate + CO2. This is NAD-dependent malic enzyme from Shigella flexneri serotype 5b (strain 8401).